The chain runs to 136 residues: Keratin-associated protein 4-2 (136 aa).

Tandem repeats lie at residues 5-9 (CCGSV), 20-24 (CCRPS), 25-29 (CCQTT), 30-34 (CCRTT), 35-39 (CCRPS), 40-44 (CCVSS), 45-49 (CCRPQ), 50-54 (CCQSV), 55-59 (CCQPT), 60-64 (CCSPS), 65-69 (CCQTT), 70-74 (CCRTT), 75-79 (CCRPS), 80-84 (CCVSS), 90-94 (CCQSV), 95-99 (YCQPT), 100-104 (CCRPS), 110-114 (CCRTT), 120-124 (CCVST), and 125-129 (CCRPT). The tract at residues 5-129 (CCGSVCSDQG…CCVSTCCRPT (125 aa)) is 20 X 5 AA repeats OF C-C-[GRQVS]-[SPT]-[VSTQ].

The protein belongs to the KRTAP type 4 family. As to quaternary structure, interacts with hair keratins.

In terms of biological role, in the hair cortex, hair keratin intermediate filaments are embedded in an interfilamentous matrix, consisting of hair keratin-associated proteins (KRTAP), which are essential for the formation of a rigid and resistant hair shaft through their extensive disulfide bond cross-linking with abundant cysteine residues of hair keratins. The matrix proteins include the high-sulfur and high-glycine-tyrosine keratins. The polypeptide is Keratin-associated protein 4-2 (KRTAP4-2) (Homo sapiens (Human)).